Consider the following 321-residue polypeptide: uncharacterized protein (321 aa).

N-acetylvaline is present on valine 2. The segment at 37–63 (SEASRLLTPQTSSNHALSKMQKDDDIR) is disordered. Polar residues predominate over residues 43–52 (LTPQTSSNHA). Threonine 44 bears the Phosphothreonine mark. 7 positions are modified to phosphoserine: serine 49, serine 69, serine 121, serine 126, serine 129, serine 137, and serine 139. 2 disordered regions span residues 115–270 (KKQR…YSIS) and 283–321 (ETLE…AQPQ). Polar residues-rich tracts occupy residues 120–145 (KSIN…TSTD), 153–162 (KYSSSGTPEN), and 178–189 (SYGQMIKNNSNR). The residue at position 159 (threonine 159) is a Phosphothreonine. The segment covering 204–229 (EIDHTAPEKSEKRQERSGRSFDRQKS) has biased composition (basic and acidic residues). Over residues 237–253 (LSRSISRGPTKNKTVSP) the composition is skewed to polar residues. 4 positions are modified to phosphoserine: serine 238, serine 240, serine 242, and serine 270. Residues 284–305 (TLEEEQEDAEKEGVLMEDEGNE) are compositionally biased toward acidic residues. Residues 306–315 (EYTKDLEEAA) are compositionally biased toward basic and acidic residues.

Its subcellular location is the cytoplasm. This is an uncharacterized protein from Saccharomyces cerevisiae (strain ATCC 204508 / S288c) (Baker's yeast).